The sequence spans 898 residues: Alanine--tRNA ligase (898 aa).

Residues histidine 582, histidine 586, cysteine 685, and histidine 689 each coordinate Zn(2+).

It belongs to the class-II aminoacyl-tRNA synthetase family. The cofactor is Zn(2+).

It is found in the cytoplasm. It catalyses the reaction tRNA(Ala) + L-alanine + ATP = L-alanyl-tRNA(Ala) + AMP + diphosphate. In terms of biological role, catalyzes the attachment of alanine to tRNA(Ala) in a two-step reaction: alanine is first activated by ATP to form Ala-AMP and then transferred to the acceptor end of tRNA(Ala). Also edits incorrectly charged Ser-tRNA(Ala) and Gly-tRNA(Ala) via its editing domain. The protein is Alanine--tRNA ligase of Mycolicibacterium gilvum (strain PYR-GCK) (Mycobacterium gilvum (strain PYR-GCK)).